Here is a 54-residue protein sequence, read N- to C-terminus: Small ribosomal subunit protein uS14 (54 aa).

Cys19, Cys22, Cys37, and Cys40 together coordinate Zn(2+).

It belongs to the universal ribosomal protein uS14 family. Zinc-binding uS14 subfamily. In terms of assembly, part of the 30S ribosomal subunit. Zn(2+) serves as cofactor.

Binds 16S rRNA, required for the assembly of 30S particles. This is Small ribosomal subunit protein uS14 from Saccharolobus solfataricus (strain ATCC 35092 / DSM 1617 / JCM 11322 / P2) (Sulfolobus solfataricus).